The chain runs to 361 residues: 45 kDa calcium-binding protein (361 aa).

Positions 1-35 are cleaved as a signal peptide; it reads MVWLVAMTPRQSSLCGLAAHGLWFLGLVLLMDATA. The N-linked (GlcNAc...) asparagine glycan is linked to Asn-39. 2 consecutive EF-hand domains span residues 97 to 132 and 136 to 171; these read RSRRKLMVIFSKVDVNTDRRISAKEMQHWIMEKTAE and EAVKENKLHFRAVDPDGDGHVSWDEYKVKFLASKGH. Residue Ser-98 is modified to Phosphoserine. Ca(2+) contacts are provided by Asp-110, Asn-112, Asp-114, Arg-116, Glu-121, Asp-149, Asp-151, Asp-153, His-155, and Glu-160. The residue at position 192 (Thr-192) is a Phosphothreonine. EF-hand domains follow at residues 196–231, 232–267, 277–312, and 313–348; these read LGNLRDRWYQADNPPADLLLTEDEFLSFLHPEHSRG, MLKFMVKEIFRDLDQDGDKQLSLPEFISLPVGTVEN, WVKDRKKEFEELIDSNHDGIVTMEELENYMDPMNEY, and NALNEAKQMIAIADENQNHHLEPEEILKYSEFFTGS. Position 212 (Asp-212) interacts with Ca(2+). At Thr-216 the chain carries Phosphothreonine. The Ca(2+) site is built by Glu-219, Asp-245, Asp-247, Asp-249, Gln-251, and Glu-256. Thr-264 carries the phosphothreonine modification. Asp-290, Asn-292, and Asp-294 together coordinate Ca(2+). Phosphothreonine is present on Thr-298. Positions 301, 326, 328, 330, 332, and 337 each coordinate Ca(2+). A necessary for intracellular retention in Golgi apparatus lumen region spans residues 308–361; it reads PMNEYNALNEAKQMIAIADENQNHHLEPEEILKYSEFFTGSKLMDYARNVHEEF.

Belongs to the CREC family. As to expression, ubiquitous.

The protein localises to the golgi apparatus lumen. Its function is as follows. May regulate calcium-dependent activities in the endoplasmic reticulum lumen or post-ER compartment. This Mus musculus (Mouse) protein is 45 kDa calcium-binding protein (Sdf4).